The following is a 144-amino-acid chain: Galectin b (144 aa).

In terms of domain architecture, Galectin spans 1-138; the sequence is DHIDLEFDVG…DAVLRKLCVV (138 aa).

Its function is as follows. Lectin that binds beta-galactoside and a wide array of complex carbohydrates. This chain is Galectin b, found in Aplysina lactuca (Marine sponge).